The following is a 369-amino-acid chain: Phospho-N-acetylmuramoyl-pentapeptide-transferase (369 aa).

The next 10 membrane-spanning stretches (helical) occupy residues 2-22 (IALLIGAGLALLFALVGTPLF), 55-75 (TVVVFAVLLSYALTHLIMWMM), 86-106 (ALLLLFLMVGMGLVGFLDDFI), 122-142 (LVLQGAVGIIFAILALNFPNA), 158-178 (IPWLNLAFGGTVLGAILFVLW), 196-216 (LDGLAAGASVMVFGAYTLMGI), 239-259 (PLDLALLAAILSAALVGFLWW), 266-286 (IFMGDTGSLAIGGAVAGFAIL), 291-311 (LLLAFIGGLFVLITLSVIIQV), and 348-368 (ILGGLFVAAGLGIFYAEWVVL).

Belongs to the glycosyltransferase 4 family. MraY subfamily. Mg(2+) serves as cofactor.

It localises to the cell membrane. It catalyses the reaction UDP-N-acetyl-alpha-D-muramoyl-L-alanyl-gamma-D-glutamyl-meso-2,6-diaminopimeloyl-D-alanyl-D-alanine + di-trans,octa-cis-undecaprenyl phosphate = di-trans,octa-cis-undecaprenyl diphospho-N-acetyl-alpha-D-muramoyl-L-alanyl-D-glutamyl-meso-2,6-diaminopimeloyl-D-alanyl-D-alanine + UMP. It participates in cell wall biogenesis; peptidoglycan biosynthesis. Its function is as follows. Catalyzes the initial step of the lipid cycle reactions in the biosynthesis of the cell wall peptidoglycan: transfers peptidoglycan precursor phospho-MurNAc-pentapeptide from UDP-MurNAc-pentapeptide onto the lipid carrier undecaprenyl phosphate, yielding undecaprenyl-pyrophosphoryl-MurNAc-pentapeptide, known as lipid I. This Arthrobacter sp. (strain FB24) protein is Phospho-N-acetylmuramoyl-pentapeptide-transferase.